An 860-amino-acid chain; its full sequence is Receptor-like protein 31 (860 aa).

A signal peptide spans 1–23; the sequence is MMIPSQSCFCFFFMVSFFLHTLA. At 24-809 the chain is on the extracellular side; it reads SPTLRHCRHD…SEPEEHVINW (786 aa). Residues N49, N64, N88, N95, N112, N117, N154, N178, N202, and N213 are each glycosylated (N-linked (GlcNAc...) asparagine). LRR repeat units lie at residues 108–131, 132–155, 156–179, 181–202, 203–226, and 227–251; these read QHLH…LGNL, FRLT…IGNL, SRLT…IGNL, QLEY…TFSN, LTKL…DMSG, and FQNL…LFTI. One copy of the LRR 7; degenerate repeat lies at 252–276; that stretch reads PSLRWANLEGNMFKGPIEFRNMYSP. LRR repeat units lie at residues 277 to 301, 302 to 325, 326 to 349, 350 to 374, 376 to 398, 400 to 419, 420 to 444, 446 to 468, 469 to 494, 496 to 517, 518 to 541, 543 to 564, 565 to 591, and 592 to 615; these read STRL…LSQY, LNLI…LFTI, PTLE…NMSS, SSSL…VSQY, NLEE…ISKL, KLEY…PSWL, WRLT…GLDE, QVQW…ICKL, RSLE…SFMV, LTDL…FVNA, TKLL…LIHC, AMQL…WLGS, LPSL…SIGF, and QSLR…YFSS. N-linked (GlcNAc...) asparagine glycans are attached at residues N313, N346, and N364. The N-linked (GlcNAc...) asparagine glycan is linked to N429. 3 N-linked (GlcNAc...) asparagine glycosylation sites follow: N482, N503, and N516. N642, N673, and N697 each carry an N-linked (GlcNAc...) asparagine glycan. LRR repeat units follow at residues 665–690, 691–714, 716–738, and 740–763; these read INEE…IGLL, KELR…LANL, KLEA…LGSL, and FMST…QFQG. Residues N745 and N765 are each glycosylated (N-linked (GlcNAc...) asparagine). Residues 810–830 form a helical membrane-spanning segment; it reads IAAGIAYGPGVVCGLVIGHIF. Topologically, residues 831–860 are cytoplasmic; it reads LSHKHECWFMEKFRRKKPKVVTRIARPSKH.

The protein belongs to the RLP family.

The protein resides in the cell membrane. The sequence is that of Receptor-like protein 31 from Arabidopsis thaliana (Mouse-ear cress).